A 521-amino-acid polypeptide reads, in one-letter code: Lysine--tRNA ligase (521 aa).

Positions 32–40 match the 'HIGH' region motif; that stretch reads PSGTVHIGN. Positions 280 to 284 match the 'KMSKS' region motif; it reads KISSS.

The protein belongs to the class-I aminoacyl-tRNA synthetase family.

The protein resides in the cytoplasm. It catalyses the reaction tRNA(Lys) + L-lysine + ATP = L-lysyl-tRNA(Lys) + AMP + diphosphate. The sequence is that of Lysine--tRNA ligase from Borrelia garinii subsp. bavariensis (strain ATCC BAA-2496 / DSM 23469 / PBi) (Borreliella bavariensis).